The chain runs to 593 residues: Aspartate--tRNA ligase (593 aa).

Glu173 contacts L-aspartate. The tract at residues 197–200 is aspartate; the sequence is QLFK. Residue Arg219 coordinates L-aspartate. ATP-binding positions include 219–221 and Gln228; that span reads RDE. His449 is an L-aspartate binding site. Glu483 is a binding site for ATP. Arg490 is an L-aspartate binding site. Residue 535–538 coordinates ATP; the sequence is GLDR.

The protein belongs to the class-II aminoacyl-tRNA synthetase family. Type 1 subfamily. In terms of assembly, homodimer.

The protein resides in the cytoplasm. It carries out the reaction tRNA(Asp) + L-aspartate + ATP = L-aspartyl-tRNA(Asp) + AMP + diphosphate. Functionally, catalyzes the attachment of L-aspartate to tRNA(Asp) in a two-step reaction: L-aspartate is first activated by ATP to form Asp-AMP and then transferred to the acceptor end of tRNA(Asp). The protein is Aspartate--tRNA ligase of Shewanella piezotolerans (strain WP3 / JCM 13877).